The following is a 447-amino-acid chain: Phosphoglucosamine mutase (447 aa).

Ser100 serves as the catalytic Phosphoserine intermediate. Positions 100, 240, 242, and 244 each coordinate Mg(2+). At Ser100 the chain carries Phosphoserine.

This sequence belongs to the phosphohexose mutase family. It depends on Mg(2+) as a cofactor. Post-translationally, activated by phosphorylation.

The catalysed reaction is alpha-D-glucosamine 1-phosphate = D-glucosamine 6-phosphate. In terms of biological role, catalyzes the conversion of glucosamine-6-phosphate to glucosamine-1-phosphate. In Clostridium botulinum (strain Alaska E43 / Type E3), this protein is Phosphoglucosamine mutase.